Reading from the N-terminus, the 305-residue chain is 2-methoxy-6-polyprenyl-1,4-benzoquinol methylase, mitochondrial (305 aa).

A mitochondrion-targeting transit peptide spans 1-34 (MSRLRAPVAKFLADGLKGIRSTALAGSRLSNCRY). Residues T117, D143, and 173 to 174 (NA) each bind S-adenosyl-L-methionine.

This sequence belongs to the class I-like SAM-binding methyltransferase superfamily. MenG/UbiE family. As to quaternary structure, component of a multi-subunit COQ enzyme complex, composed of at least COQ3, COQ4, COQ5, COQ6, COQ7 and COQ9.

The protein resides in the mitochondrion inner membrane. The catalysed reaction is 2-methoxy-6-(all-trans-decaprenyl)benzene-1,4-diol + S-adenosyl-L-methionine = 5-methoxy-2-methyl-3-(all-trans-decaprenyl)benzene-1,4-diol + S-adenosyl-L-homocysteine + H(+). It functions in the pathway cofactor biosynthesis; ubiquinone biosynthesis. Functionally, methyltransferase required for the conversion of 2-decaprenyl-6-methoxy-1,4-benzoquinol (DDMQH2) to 2-decaprenyl-3-methyl-6-methoxy-1,4-benzoquinol (DMQH2). This chain is 2-methoxy-6-polyprenyl-1,4-benzoquinol methylase, mitochondrial, found in Schizosaccharomyces pombe (strain 972 / ATCC 24843) (Fission yeast).